We begin with the raw amino-acid sequence, 65 residues long: Toxin Cbo5 (65 aa).

The LCN-type CS-alpha/beta domain maps to 2–65 (KDGYLVDKTG…QTWPLPNKSC (64 aa)). Disulfide bonds link Cys12–Cys65, Cys16–Cys41, Cys25–Cys46, and Cys29–Cys48.

This sequence belongs to the long (4 C-C) scorpion toxin superfamily. Sodium channel inhibitor family. Beta subfamily. In terms of tissue distribution, expressed by the venom gland.

It is found in the secreted. Functionally, a probable toxin that has no activity on the tested sodium channels (when tested at 200 nM) and is not toxic to mice, crickets or sweet water shrimps. It resembles Beta toxins that bind voltage-independently at site-4 of sodium channels and shift the voltage of activation toward more negative potentials, thereby affecting sodium channel activation and promoting spontaneous and repetitive firing. The chain is Toxin Cbo5 from Centruroides bonito (Scorpion).